The primary structure comprises 897 residues: Major intrinsically disordered Notch2-binding receptor 1 (897 aa).

Residues 1–872 (MDAMPEYSLF…AEFRRAKACK (872 aa)) lie on the Cytoplasmic side of the membrane. Disordered stretches follow at residues 405 to 433 (AKDK…SVAC), 450 to 502 (SINC…EDSE), and 688 to 766 (TRRS…PPKD). 2 stretches are compositionally biased toward polar residues: residues 411-423 (ASPS…SNGS) and 452-471 (NCPS…GTQT). Residues 472 to 498 (EQHESRKVKDYPSQNKFKERPPFKHSE) show a composition bias toward basic and acidic residues. Positions 697 to 724 (EENSATESKVASITNSPRDWRTVSYSSH) are enriched in polar residues. A compositionally biased stretch (basic and acidic residues) spans 725-756 (NGEEGKERDRHSEGKERHRKSREAERQYEAHQ). Residues 873-893 (IGALIFAAACTVILVIVVPIC) form a helical membrane-spanning segment. The Extracellular portion of the chain corresponds to 894–897 (TMKS).

The protein belongs to the MINAR family.

It is found in the cell membrane. Intrinsically disordered protein which may negatively regulate mTOR signaling pathway by stabilizing the mTOR complex component DEPTOR. Negatively regulates angiogenesis. Negatively regulates cell growth. May play a role in neuronal development. In Danio rerio (Zebrafish), this protein is Major intrinsically disordered Notch2-binding receptor 1 (minar1).